Reading from the N-terminus, the 249-residue chain is Type III pantothenate kinase (249 aa).

Residue 6-13 (DCGNSFIK) coordinates ATP. Substrate contacts are provided by residues Tyr-93 and 100–103 (GLDR). The active-site Proton acceptor is the Asp-102. Asp-122 contacts K(+). ATP is bound at residue Thr-125. Position 181 (Thr-181) interacts with substrate.

Belongs to the type III pantothenate kinase family. In terms of assembly, homodimer. NH4(+) is required as a cofactor. K(+) serves as cofactor.

It is found in the cytoplasm. The catalysed reaction is (R)-pantothenate + ATP = (R)-4'-phosphopantothenate + ADP + H(+). It functions in the pathway cofactor biosynthesis; coenzyme A biosynthesis; CoA from (R)-pantothenate: step 1/5. Catalyzes the phosphorylation of pantothenate (Pan), the first step in CoA biosynthesis. The chain is Type III pantothenate kinase from Pseudomonas syringae pv. syringae (strain B728a).